The chain runs to 156 residues: ATP synthase subunit b (156 aa).

The chain crosses the membrane as a helical span at residues 7–27; sequence LFAQLVVFFILAWFTMKFVWP.

Belongs to the ATPase B chain family. F-type ATPases have 2 components, F(1) - the catalytic core - and F(0) - the membrane proton channel. F(1) has five subunits: alpha(3), beta(3), gamma(1), delta(1), epsilon(1). F(0) has four main subunits: a(1), b(2) and c(10-14). The alpha and beta chains form an alternating ring which encloses part of the gamma chain. F(1) is attached to F(0) by a central stalk formed by the gamma and epsilon chains, while a peripheral stalk is formed by the delta and b chains.

Its subcellular location is the cell inner membrane. Functionally, f(1)F(0) ATP synthase produces ATP from ADP in the presence of a proton or sodium gradient. F-type ATPases consist of two structural domains, F(1) containing the extramembraneous catalytic core and F(0) containing the membrane proton channel, linked together by a central stalk and a peripheral stalk. During catalysis, ATP synthesis in the catalytic domain of F(1) is coupled via a rotary mechanism of the central stalk subunits to proton translocation. Component of the F(0) channel, it forms part of the peripheral stalk, linking F(1) to F(0). The chain is ATP synthase subunit b from Methylibium petroleiphilum (strain ATCC BAA-1232 / LMG 22953 / PM1).